We begin with the raw amino-acid sequence, 512 residues long: Chlorogenic acid esterase (512 aa).

Positions 1–18 are cleaved as a signal peptide; the sequence is MLLRLCIIATLLVSHCVA. 3 N-linked (GlcNAc...) asparagine glycosylation sites follow: Asn47, Asn80, and Asn98. Cys92 and Cys120 form a disulfide bridge. Ser230 (acyl-ester intermediate) is an active-site residue. A glycan (N-linked (GlcNAc...) asparagine) is linked at Asn271. A disulfide bridge links Cys281 with Cys292. Asn295, Asn322, and Asn328 each carry an N-linked (GlcNAc...) asparagine glycan. Residue Glu351 is the Charge relay system of the active site. 2 N-linked (GlcNAc...) asparagine glycosylation sites follow: Asn391 and Asn402. The active-site Charge relay system is His416. Asn474 carries N-linked (GlcNAc...) asparagine glycosylation.

The protein belongs to the type-B carboxylesterase/lipase family.

It is found in the secreted. It catalyses the reaction chlorogenate + H2O = L-quinate + (E)-caffeate + H(+). In terms of biological role, extracellular chlorogenic acid esterase that releases caffeic acid from chlorogenic acid (CGA) contained in natural substrates such as apple marc and coffee pulp. Shows no activity towards 5-O-p-coumaroyl quinic acid, another quinic ester derivative, and rosmarinic acid, another caffeic ester derivative. The chain is Chlorogenic acid esterase from Aspergillus niger.